Consider the following 123-residue polypeptide: Proteasome assembly chaperone 4 (123 aa).

It belongs to the PSMG4 family. As to quaternary structure, interacts with PSMG3. Associates with alpha subunits of the 20S proteasome.

Its function is as follows. Chaperone protein which promotes assembly of the 20S proteasome. In Homo sapiens (Human), this protein is Proteasome assembly chaperone 4.